We begin with the raw amino-acid sequence, 432 residues long: C(50) beta-cyclic carotenoids biosynthesis protein LbtBC (432 aa).

The tract at residues 1-140 (MTSLYTTLNL…DDDEVRTPER (140 aa)) is beta-cyclase. 3 helical membrane-spanning segments follow: residues 4 to 24 (LYTT…LLAA), 36 to 56 (LIGV…FDNI), and 83 to 103 (FAYA…LTAS). The interval 111–140 (GSPTVSGRGDALLTRAPEPGDDDEVRTPER) is disordered. The interval 141–432 (PGTPGLLTTL…IVLWSVLVWS (292 aa)) is elongase/hydratase. The next 7 membrane-spanning stretches (helical) occupy residues 170 to 190 (YFLA…FFLV), 252 to 272 (ESSL…AKGL), 277 to 297 (IPFL…IVGW), 299 to 319 (IAGA…MLWG), 350 to 370 (AAVW…LAAA), 374 to 394 (ASGA…YVGV), and 409 to 429 (FLVL…WSVL).

Belongs to the UbiA prenyltransferase family. As to quaternary structure, may form a complex with LbtA.

The protein localises to the cell membrane. It carries out the reaction all-trans-lycopene + dimethylallyl diphosphate + H2O = dihydroisopentenyldehydrorhodopin + diphosphate. The catalysed reaction is isopentenyldehydrorhodopin + dimethylallyl diphosphate + H2O = dihydrobisanhydrobacterioruberin + diphosphate. Its pathway is carotenoid biosynthesis. Functionally, involved in the biosynthesis of C(50) beta-cyclic carotenoids. The elongase/hydratase domain catalyzes the elongation of lycopene by attaching a C(5) isoprene unit at C-2, as well as the hydroxylation of the previous end of the molecule. The enzyme acts at both ends of the substrate, and catalyzes the conversion of lycopene to the C(45) intermediate dihydroisopentenyldehydrorhodopin (DH-IDR) and the conversion of isopentenyldehydrorhodopin (IDR) to the C(50) carotenoid dihydrobisanhydrobacterioruberin (DH-BABR). The beta-cyclase domain may produce the C(50) beta-cyclic carotenoid C.p.450 from the C(50) carotenoid dihydrobisanhydrobacterioruberin (DH-BABR). In Dietzia sp. (strain CQ4), this protein is C(50) beta-cyclic carotenoids biosynthesis protein LbtBC.